Here is a 218-residue protein sequence, read N- to C-terminus: MKEVAKPLQERFFIPHEIKVMGRWSTEDVEVKDPSLKPYINLEPRLLPHTHGRHAKKHFGKANVHIVERLINKVMRSGGSHYKVAGHFMRREHRSLNSKKVRAYEVVKEAFKIIEKRTGKNPIQVLVWAIENAAPREDTTSVMFGGIRYHVAVDISPLRRLDVALRNIALGASAKCYRTKMSFAEALAEEIILAANKDPKSYAYSKKLEIERIAESSR.

This sequence belongs to the universal ribosomal protein uS7 family. As to quaternary structure, part of the 30S ribosomal subunit.

Its function is as follows. One of the primary rRNA binding proteins, it binds directly to 16S rRNA where it nucleates assembly of the head domain of the 30S subunit. Is located at the subunit interface close to the decoding center. The polypeptide is Small ribosomal subunit protein uS7 (rps7) (Pyrococcus horikoshii (strain ATCC 700860 / DSM 12428 / JCM 9974 / NBRC 100139 / OT-3)).